A 459-amino-acid chain; its full sequence is Phosphomethylpyrimidine synthase (459 aa).

Substrate contacts are provided by residues Asn-80, Met-109, Tyr-139, His-175, 195–197 (SRG), 236–239 (DSLR), and Glu-275. Position 279 (His-279) interacts with Zn(2+). Residue Tyr-302 coordinates substrate. His-343 is a binding site for Zn(2+). Residues Cys-423, Cys-426, and Cys-431 each contribute to the [4Fe-4S] cluster site.

The protein belongs to the ThiC family. [4Fe-4S] cluster is required as a cofactor.

It catalyses the reaction 5-amino-1-(5-phospho-beta-D-ribosyl)imidazole + S-adenosyl-L-methionine = 4-amino-2-methyl-5-(phosphooxymethyl)pyrimidine + CO + 5'-deoxyadenosine + formate + L-methionine + 3 H(+). The protein operates within cofactor biosynthesis; thiamine diphosphate biosynthesis. In terms of biological role, catalyzes the synthesis of the hydroxymethylpyrimidine phosphate (HMP-P) moiety of thiamine from aminoimidazole ribotide (AIR) in a radical S-adenosyl-L-methionine (SAM)-dependent reaction. The chain is Phosphomethylpyrimidine synthase from Prochlorococcus marinus (strain MIT 9211).